A 428-amino-acid polypeptide reads, in one-letter code: 3-phosphoshikimate 1-carboxyvinyltransferase (428 aa).

3-phosphoshikimate is bound by residues K23, S24, and R28. Residue K23 participates in phosphoenolpyruvate binding. Positions 92 and 120 each coordinate phosphoenolpyruvate. Residues S165, Q167, D312, and K339 each coordinate 3-phosphoshikimate. Q167 serves as a coordination point for phosphoenolpyruvate. D312 functions as the Proton acceptor in the catalytic mechanism. Phosphoenolpyruvate is bound by residues R343 and R384.

The protein belongs to the EPSP synthase family. As to quaternary structure, monomer.

It is found in the cytoplasm. The enzyme catalyses 3-phosphoshikimate + phosphoenolpyruvate = 5-O-(1-carboxyvinyl)-3-phosphoshikimate + phosphate. It participates in metabolic intermediate biosynthesis; chorismate biosynthesis; chorismate from D-erythrose 4-phosphate and phosphoenolpyruvate: step 6/7. Catalyzes the transfer of the enolpyruvyl moiety of phosphoenolpyruvate (PEP) to the 5-hydroxyl of shikimate-3-phosphate (S3P) to produce enolpyruvyl shikimate-3-phosphate and inorganic phosphate. This chain is 3-phosphoshikimate 1-carboxyvinyltransferase, found in Sulfurimonas denitrificans (strain ATCC 33889 / DSM 1251) (Thiomicrospira denitrificans (strain ATCC 33889 / DSM 1251)).